We begin with the raw amino-acid sequence, 300 residues long: F-box protein SKIP1 (300 aa).

In terms of domain architecture, F-box; degenerate spans 11-52 (LAPEILINIISRLTIQELWTGPMFVQKSWLTVCRDPYLWSIF).

As to quaternary structure, part of a SCF (ASK-cullin-F-box) protein ligase complex. Interacts with SKP1A/ASK1 and SKP1B/ASK2.

The protein resides in the nucleus. Its pathway is protein modification; protein ubiquitination. In terms of biological role, component of SCF(ASK-cullin-F-box) E3 ubiquitin ligase complexes, which may mediate the ubiquitination and subsequent proteasomal degradation of target proteins. The polypeptide is F-box protein SKIP1 (SKIP1) (Arabidopsis thaliana (Mouse-ear cress)).